Reading from the N-terminus, the 686-residue chain is Pollen receptor-like kinase 5 (686 aa).

A signal peptide spans 1 to 39 (MRNWEDPFTLACNTALKKNLPSCIFIIIFISVLCPVAMS). Residues 40–283 (QVVVPDSDAD…GKKAGSFYTL (244 aa)) are Extracellular-facing. The N-linked (GlcNAc...) asparagine glycan is linked to Asn60. LRR repeat units lie at residues 112-135 (MKNL…VKRF), 136-159 (TSLK…AFLG), 161-184 (PLLK…LASL), 185-208 (PMLL…QQKD), and 210-230 (KLAS…LRNM). The helical transmembrane segment at 284-304 (AIILIVIGIILVIIALVFCFV) threads the bilayer. Residues 305-686 (QSRRRNFLSA…DDDFGFSMNR (382 aa)) are Cytoplasmic-facing. Over residues 328 to 339 (NYHQSTNKNNKP) the composition is skewed to polar residues. A disordered region spans residues 328–355 (NYHQSTNKNNKPAESVNHTRRGSMPDPG). The Protein kinase domain maps to 375–648 (RASAEVLGSG…REVVEMVEML (274 aa)). At Ser377 the chain carries Phosphoserine. ATP is bound by residues 381-389 (LGSGTFGAS) and Lys403. Ser455 and Ser458 each carry phosphoserine. Thr472 is subject to Phosphothreonine. Tyr542 is subject to Phosphotyrosine. A Phosphoserine modification is found at Ser545.

The protein belongs to the protein kinase superfamily. Ser/Thr protein kinase family. As to quaternary structure, interacts with the GRI peptide. Expressed in pollen and/or in flowers. Detected at low levels in leaves.

It is found in the cell membrane. The catalysed reaction is L-seryl-[protein] + ATP = O-phospho-L-seryl-[protein] + ADP + H(+). The enzyme catalyses L-threonyl-[protein] + ATP = O-phospho-L-threonyl-[protein] + ADP + H(+). Functionally, receptor-like kinase involved in the control of pollen germination and pollen tube polar growth. The extracellular domain serves as a sensor for peptides derived from GRI. May act as a downstream element for ROS-dependent cell death induced by GRI. The protein is Pollen receptor-like kinase 5 of Arabidopsis thaliana (Mouse-ear cress).